The primary structure comprises 308 residues: D-alanine--D-alanine ligase (308 aa).

Residues 105 to 302 (KAIFRSLGLA…FPDLCDRILD (198 aa)) enclose the ATP-grasp domain. Position 133–188 (133–188 (DLPFGLPCVVKPAGEGSSVGVHLVNAAAELGPACRDAAGYAGDVIVERYVKGTEVD)) interacts with ATP. Residues D256, E269, and N271 each contribute to the Mg(2+) site.

This sequence belongs to the D-alanine--D-alanine ligase family. It depends on Mg(2+) as a cofactor. The cofactor is Mn(2+).

The protein resides in the cytoplasm. The enzyme catalyses 2 D-alanine + ATP = D-alanyl-D-alanine + ADP + phosphate + H(+). It functions in the pathway cell wall biogenesis; peptidoglycan biosynthesis. Cell wall formation. This chain is D-alanine--D-alanine ligase, found in Anaeromyxobacter dehalogenans (strain 2CP-C).